The primary structure comprises 1114 residues: OTU domain-containing protein 4 (1114 aa).

M1 bears the N-acetylmethionine mark. The segment at 1 to 22 is disordered; that stretch reads MEAAVGVPDGGDQGGAGPREDA. A compositionally biased stretch (gly residues) spans 8 to 17; the sequence is PDGGDQGGAG. An OTU domain is found at 34–155; the sequence is LYRKLVAKDG…GNHYDIVYPI (122 aa). A cys-loop region spans residues 39–45; that stretch reads VAKDGSC. D42 is an active-site residue. Residue C45 is the Nucleophile of the active site. The segment at 94-104 is variable-loop; that stretch reads LENPQEWVGQV. Y120 carries the phosphotyrosine modification. S126 and S128 each carry phosphoserine. T131 carries the post-translational modification Phosphothreonine. Residues 143 to 148 are his-loop; the sequence is FSNGNH. The active site involves H148. Residues S166, S199, S202, S204, and S341 each carry the phosphoserine modification. Residues 323 to 449 form a disordered region; that stretch reads KHTSKNLKAP…FGLSPEERRE (127 aa). The segment covering 392-404 has biased composition (low complexity); the sequence is FSSHSSGSQSQKF. A compositionally biased stretch (basic and acidic residues) spans 420 to 435; sequence RKPDRERVEDFDHTSR. Position 439 is a phosphotyrosine (Y439). S443 is subject to Phosphoserine. Residue Y460 is modified to Phosphotyrosine. The disordered stretch occupies residues 472 to 567; the sequence is ALSSSSVNQS…PAEQKPAEHV (96 aa). A compositionally biased stretch (low complexity) spans 474-487; that stretch reads SSSSVNQSASQSSN. Positions 496–529 are enriched in basic and acidic residues; the sequence is HVGDRKGSRRRMDTEERKDKDSIHGHSQLDKRPE. Phosphoserine is present on residues S546, S893, and S900. The disordered stretch occupies residues 911–1114; that stretch reads EFPEARGEHV…MGDGHRGQHT (204 aa). Basic and acidic residues-rich tracts occupy residues 913–922 and 969–1000; these read PEARGEHVHS and NRER…DPKT. Phosphoserine is present on residues S1006, S1011, S1014, S1023, and S1024. Residues 1039–1048 show a composition bias toward polar residues; sequence SKQFYNQTYG. S1049 carries the phosphoserine modification. Composition is skewed to basic and acidic residues over residues 1067–1086 and 1096–1114; these read VRSE…EGYQ and FRGD…GQHT.

Interacts with MYD88; the interaction is direct. Interacts with ALKBH3; the interaction is direct. Interacts with USP7; the interaction is direct. Interacts with USP9X; the interaction is direct. In terms of processing, phosphorylated on Ser-202 and Ser-204 likely by CSNK2A1-CSNK2A2 serine/threonine-protein kinase complex. Activates 'Lys-63'-specific deubiquitinase activity.

It is found in the cytoplasm. It localises to the nucleus. It catalyses the reaction Thiol-dependent hydrolysis of ester, thioester, amide, peptide and isopeptide bonds formed by the C-terminal Gly of ubiquitin (a 76-residue protein attached to proteins as an intracellular targeting signal).. Phosphorylation on Ser-202 and Ser-204 induces 'Lys-63'-specific deubiquitinase activity. Its function is as follows. Deubiquitinase which hydrolyzes the isopeptide bond between the ubiquitin C-terminus and the lysine epsilon-amino group of the target protein. May negatively regulate inflammatory and pathogen recognition signaling in innate immune response. Upon phosphorylation at Ser-202 and Ser-204 residues, via IL-1 receptor and Toll-like receptor signaling pathway, specifically deubiquitinates 'Lys-63'-polyubiquitinated MYD88 adapter protein triggering down-regulation of NF-kappa-B-dependent transcription of inflammatory mediators. Independently of the catalytic activity, acts as a scaffold for alternative deubiquitinases to assemble specific deubiquitinase-substrate complexes. Associates with USP7 and USP9X deubiquitinases to stabilize alkylation repair enzyme ALKBH3, thereby promoting the repair of alkylated DNA lesions. The polypeptide is OTU domain-containing protein 4 (Homo sapiens (Human)).